A 212-amino-acid polypeptide reads, in one-letter code: MNAGTPQHSSAWDPVGLGLIPMVVEQSGRGERSYDIYSRLLKERVVFLVGPVNDVTANLIVAQLLFLESENPDKDIYFYINSPGGSVTAGLAIYDTMQFIKPNVSTLCIGQAASMGAFLLAAGEKGKRFCLPNSRVMIHQPLGGFQGQASDIEIHAREILYLRERLNGMLAKHTGQTIEQIEKDTDRDNFMSATAAVEYGLVDKVLTSRADT.

The active-site Nucleophile is S114. H139 is an active-site residue.

Belongs to the peptidase S14 family. As to quaternary structure, fourteen ClpP subunits assemble into 2 heptameric rings which stack back to back to give a disk-like structure with a central cavity, resembling the structure of eukaryotic proteasomes.

It is found in the cytoplasm. It catalyses the reaction Hydrolysis of proteins to small peptides in the presence of ATP and magnesium. alpha-casein is the usual test substrate. In the absence of ATP, only oligopeptides shorter than five residues are hydrolyzed (such as succinyl-Leu-Tyr-|-NHMec, and Leu-Tyr-Leu-|-Tyr-Trp, in which cleavage of the -Tyr-|-Leu- and -Tyr-|-Trp bonds also occurs).. Its function is as follows. Cleaves peptides in various proteins in a process that requires ATP hydrolysis. Has a chymotrypsin-like activity. Plays a major role in the degradation of misfolded proteins. This is ATP-dependent Clp protease proteolytic subunit from Azoarcus sp. (strain BH72).